The following is a 299-amino-acid chain: Putative adenosine/adenine deaminase (299 aa).

Residues H16 and H18 each coordinate Zn(2+). Positions 18 and 157 each coordinate substrate. A Zn(2+)-binding site is contributed by H184. E187 acts as the Proton donor in catalysis. A Zn(2+)-binding site is contributed by D265. D266 is a substrate binding site.

It belongs to the metallo-dependent hydrolases superfamily. Adenosine and AMP deaminases family. Zn(2+) serves as cofactor.

Its function is as follows. Putative nucleoside deaminase. May catalyze the hydrolytic deamination of adenosine or some similar substrate and play a role in purine metabolism. This Treponema pallidum (strain Nichols) protein is Putative adenosine/adenine deaminase.